Here is a 255-residue protein sequence, read N- to C-terminus: MWIGIISLFPEMFRAITDYGVTGRAVKNGLLSIESWSPRDFTHDRHRTVDDRPYGGGPGMLMMVQPLRDAIHAAKAAAGEGAKVIYLSPQGRKLDQAGVSELATNQKLILVCGRYEGIDERVIQTEIDEEWSIGDYVLSGGELPAMTLIDSVSRFIPGVLGHEASATEDSFADGLLDCPHYTRPEVLEEMEVPPVLLSGNHAEIRRWRLKQSLGRTWLRRPELLENLALTEEQAKLLSEFKTEHAQQQHKHDGQA.

S-adenosyl-L-methionine is bound by residues G113 and 133–138 (IGDYVL).

This sequence belongs to the RNA methyltransferase TrmD family. In terms of assembly, homodimer.

The protein resides in the cytoplasm. It catalyses the reaction guanosine(37) in tRNA + S-adenosyl-L-methionine = N(1)-methylguanosine(37) in tRNA + S-adenosyl-L-homocysteine + H(+). Functionally, specifically methylates guanosine-37 in various tRNAs. The polypeptide is tRNA (guanine-N(1)-)-methyltransferase (Klebsiella pneumoniae subsp. pneumoniae (strain ATCC 700721 / MGH 78578)).